The chain runs to 260 residues: uncharacterized protein (260 aa).

This is an uncharacterized protein from Bacillus subtilis (strain 168).